The sequence spans 450 residues: Ribosomal protein uS12 methylthiotransferase RimO (450 aa).

Residues 9 to 124 (NRINVVTLGC…LLSALEADYK (116 aa)) form the MTTase N-terminal domain. Residues cysteine 18, cysteine 53, cysteine 87, cysteine 148, cysteine 152, and cysteine 155 each contribute to the [4Fe-4S] cluster site. A Radical SAM core domain is found at 134 to 365 (TTPKNYAYLK…EIQSQISWEL (232 aa)). The TRAM domain occupies 367 to 434 (QQKIGEVFNV…DFDLYGEPLN (68 aa)).

Belongs to the methylthiotransferase family. RimO subfamily. [4Fe-4S] cluster serves as cofactor.

It is found in the cytoplasm. It carries out the reaction L-aspartate(89)-[ribosomal protein uS12]-hydrogen + (sulfur carrier)-SH + AH2 + 2 S-adenosyl-L-methionine = 3-methylsulfanyl-L-aspartate(89)-[ribosomal protein uS12]-hydrogen + (sulfur carrier)-H + 5'-deoxyadenosine + L-methionine + A + S-adenosyl-L-homocysteine + 2 H(+). Functionally, catalyzes the methylthiolation of an aspartic acid residue of ribosomal protein uS12. This is Ribosomal protein uS12 methylthiotransferase RimO from Christiangramia forsetii (strain DSM 17595 / CGMCC 1.15422 / KT0803) (Gramella forsetii).